The primary structure comprises 549 residues: Probable protein kinase UbiB (549 aa).

Residues 123 to 501 form the Protein kinase domain; the sequence is DFNETPLASA…QQQAHKSNYL (379 aa). Residues 129-137 and Lys-152 contribute to the ATP site; that span reads LASASISQV. The active-site Proton acceptor is the Asp-287. A run of 2 helical transmembrane segments spans residues 496–516 and 520–540; these read HKSN…TLLI and ATLW…FVGW.

The protein belongs to the ABC1 family. UbiB subfamily.

The protein resides in the cell inner membrane. Its pathway is cofactor biosynthesis; ubiquinone biosynthesis [regulation]. In terms of biological role, is probably a protein kinase regulator of UbiI activity which is involved in aerobic coenzyme Q (ubiquinone) biosynthesis. The chain is Probable protein kinase UbiB from Shewanella baltica (strain OS185).